Reading from the N-terminus, the 127-residue chain is Large ribosomal subunit protein eL18 (127 aa).

This sequence belongs to the eukaryotic ribosomal protein eL18 family.

This chain is Large ribosomal subunit protein eL18, found in Methanopyrus kandleri (strain AV19 / DSM 6324 / JCM 9639 / NBRC 100938).